The chain runs to 156 residues: Small ribosomal subunit protein uS7 (156 aa).

It belongs to the universal ribosomal protein uS7 family. In terms of assembly, part of the 30S ribosomal subunit. Contacts proteins S9 and S11.

Its function is as follows. One of the primary rRNA binding proteins, it binds directly to 16S rRNA where it nucleates assembly of the head domain of the 30S subunit. Is located at the subunit interface close to the decoding center, probably blocks exit of the E-site tRNA. This Acetivibrio thermocellus (strain ATCC 27405 / DSM 1237 / JCM 9322 / NBRC 103400 / NCIMB 10682 / NRRL B-4536 / VPI 7372) (Clostridium thermocellum) protein is Small ribosomal subunit protein uS7.